A 1372-amino-acid chain; its full sequence is MMTASFKGIRISKPIVKEISSFGSLTNIDLHTDPYEKVEAKALSRSRLKNQSVKKTDLRITNDYSSLFVSIENKKNTIPDIHCNNLSKRPVGFTDSYVPGEALLCPDDPNLVNELFDDVLKRLREEKSDSGEQFHWDANVTLSQENKWSFITGYLSRNDKFLKISSNDSELNVKASVISYIEKLSCTPLKLKYVESLAVALRTESVTWVRYFLLMGGHIVLAKILQAIHEKKHLKSPDITLEIAILKSMRCIIGQKIGTDFYLSNKYPIDSVVHCLLSTKLLVRKLAAELLTFLCYSEKPNGINAIMKCMKNFANLKVESMNVFDLWLSQWKRTLLEKVVTEEKKVLEEAALHDKITIEYIISQMLLINAFLENIPSKTALLQFKESLRIGNFKSILLILKKINDEGVLKQLEKCVKLVSLDTANEKHFLKHTPNSAAHQSLLNTNMFNDANFEFMVKEHIKNFLKLLKEHNNPVRIIKLLDCLVLTLQADKGNGNSNNDIDCFYKELKIGNEQGNNAPGYSSVTSGYGTTNSKKVVASYDNTDDNEYSVSKSELYATGDTNNTTNQGYENSERKYVESSKYETDLKNIFDCLCLLFPSEFDPQSSFSAEKIFSKLKHLLTRTRDSYISEDTKILRLLNRSSSKLQDRDQEYLISKNNVNGNGNRDWVQPVNTTSSVSAFASPRIKPKLLFQPNQDEKLKLCKLDLAKANSITLKSEPSSAVSTHSFEVHLSMPGTQIKSANLAEKMETSKHKVFNPKRIDVVSDLPLDYRKSYYGRFSITDTKRFSKIENMRIKEVIDGNPFKAPPPAPLPPPAPPLPTAMSSLQKFEKNDSQIFRKTIIIPENISIDDIFKFCSGSESEVYASKIPGELCNPSKRLKQLHWKRLEVPFEKTLWNIVVADPYLLTLKLTAEGIFKQLEDCYPLREVTVSNKKVKEYTGFMPVDLQQMVSIRLHRFNSLTPIEIAKKFFHCDHDIMELVDFFNDRKFFRQEGLKKQLKPYMSSRNEEVMEVSEKLLELSRFDQIYTLIVVDIDTYYEKRMAALKIKSFLANNFRDFRRQIRKLHCASLELKSSLHFKYFLNLVLHIGNFMNDAPRRAKGYRLESLLRASMIKNDKTGLTLLHTIEKIVRTHFPQLEAFLVDLKAIPEISRFNLEQLEQDCNDICERMKNVEKDFSNEGIFSNHKALHPDDHICEVMVPWIPSGKSMVDELNSDITELKTTLKTTLLMYGENPDEPTSSARFFNNLNEIILEYKKASTVNQKMEKEEELAFLRLQALKASVKSNNAENSGSSKNEEVSATMENLISQLQKGLCDDSLSNKTDCTESSKQTIETLMNYENDKQTLEGSNKKRQTVVLKAECMLKQLENNNELKR.

The GBD/FH3 domain occupies 104–522; that stretch reads LCPDDPNLVN…EQGNNAPGYS (419 aa). An SH3-binding motif is present at residues 802–817; the sequence is PFKAPPPAPLPPPAPP. An FH2 domain is found at 868 to 1278; the sequence is PGELCNPSKR…AFLRLQALKA (411 aa).

This sequence belongs to the formin homology family. BNI1 subfamily. Interacts with actin at the FH2 domain.

The protein resides in the cytoplasm. In terms of biological role, required for cell fusion. It associates with the pre-zygotic projection tips in conjugating cells. In Schizosaccharomyces pombe (strain 972 / ATCC 24843) (Fission yeast), this protein is Cell fusion protein fus1 (fus1).